A 618-amino-acid polypeptide reads, in one-letter code: MTGFWVLCFVLFPSSLSYPESWMPLVNLTHHILRDTNSSLFSNCWVCLSTQTQRSLAVPAPLSIWTDTPMKLHLTYSVRPFSGSFSISDIERRLRLFRPLTASYSFHNPDRRAIAFLQLVSSTGIFRIITRITSVIYPHKDRFFESAQRPLWGPLFTETVLRSQAPLCISRFFKVSAYATFVGNLSASLCNYTMHISPSTSHENLDLSTTHTFKQAMKRPDAKWKNPLRFSGPPSLIFSKPAYYPCPTDIKHCHTSPATPWMHCPQAPFGTCYNLTLFEPDNSTHPVTMSVNPTHFKVKLQGHRDPYPLSHYQPLTGAALSGQYSVWENEITVQENWDITSNIFSHLLSFSYAFCLNSSGVFFLCGTSTYICLPANWSGVCTLVFQYPDIELLPNNQTVPVPLFASVLSSDSVLRPKRSPHLFPFLAGLGISSALGTGIAGLATSTLYFQQLSKVLSETLEEIAASITTLQNQIDSLAGVVLQNRRALDLITAEKGGTCLFLQEECCFYVNQSGIVRDAARKLQERASELGQHSDSWGQWPDLGRWLPWLTPFLGPLLFLFFLLTFGSCLLNCLTRFVSQRLGSFVQDTAKRHVDSILQNFQYKKLPQDSPDEDTIPT.

The N-terminal stretch at 1–17 is a signal peptide; the sequence is MTGFWVLCFVLFPSSLS. Over 18–545 the chain is Extracellular; sequence YPESWMPLVN…SWGQWPDLGR (528 aa). Asparagine 27 carries an N-linked (GlcNAc...) asparagine glycan. Positions 44–47 match the CXXC motif; that stretch reads CWVC. Intrachain disulfides connect cysteine 44-cysteine 47, cysteine 44-cysteine 507, and cysteine 499-cysteine 506. Asparagine 184, asparagine 274, and asparagine 357 each carry an N-linked (GlcNAc...) asparagine glycan. The segment at 422-442 is fusion peptide; it reads LFPFLAGLGISSALGTGIAGL. An immunosuppression region spans residues 482–498; sequence LQNRRALDLITAEKGGT. Residues 499 to 507 carry the CX6CC motif; it reads CLFLQEECC. Residues 546-566 traverse the membrane as a helical segment; sequence WLPWLTPFLGPLLFLFFLLTF. The Cytoplasmic segment spans residues 567-618; that stretch reads GSCLLNCLTRFVSQRLGSFVQDTAKRHVDSILQNFQYKKLPQDSPDEDTIPT.

Belongs to the gamma type-C retroviral envelope protein family. As to quaternary structure, the mature protein consists of a trimer of SU-TM heterodimers. The SU-TM heterodimers are attached by a labile interchain disulfide bond. Synthesized as an inactive precursor that is heavily N-glycosylated and processed likely by furin in the Golgi to yield the mature SU and TM proteins. The cleavage site between SU and TM requires the minimal sequence [KR]-X-[KR]-R. Post-translationally, the CXXC motif is highly conserved across a broad range of retroviral envelope proteins. It is thought to participate in the formation of a labile disulfide bond possibly with the CX6CC motif present in the transmembrane protein. Isomerization of the intersubunit disulfide bond to an SU intrachain disulfide bond is thought to occur upon receptor recognition in order to allow membrane fusion. Highly expressed in placenta where it localizes to syncytiotrophoblasts of the labyrinthine zona. Specifically localizes to syncytiotrophoblast layer II (SynT-II). Also detected at very low levels in ovary.

It is found in the cell membrane. In terms of biological role, this endogenous retroviral envelope protein has retained its original fusogenic properties. Together with Syna, participates in trophoblast fusion and the formation of a syncytium during placenta morphogenesis. Synb is specifically involved in formation of syncytiotrophoblast layer II (SynT-II). Promotes myoblast fusion, and may play a role in regeneration of damaged muscle tissue in males. May have immunosuppressive activity. The sequence is that of Syncytin-B from Mus musculus (Mouse).